We begin with the raw amino-acid sequence, 202 residues long: T-cell surface glycoprotein CD3 epsilon chain (202 aa).

The N-terminal stretch at 1–21 (MPSGSLWRVLGLCLLSVGAWG) is a signal peptide. At 22 to 125 (QEDNEDPLEP…NCVEVDTMTA (104 aa)) the chain is on the extracellular side. Residues 33–107 (PQTSASARYK…TSNSLEKNYL (75 aa)) enclose the Ig-like domain. An intrachain disulfide couples cysteine 54 to cysteine 96. The chain crosses the membrane as a helical span at residues 126-146 (VAIVVADVCITLGFLLLVYYW). The Cytoplasmic portion of the chain corresponds to 147-202 (SKNKKASSVTMMRGPGAGGRPRGQNKEKPPPVPNPDYEPIRKGQQDLYSGLNQRGI). The segment at 156–202 (TMMRGPGAGGRPRGQNKEKPPPVPNPDYEPIRKGQQDLYSGLNQRGI) is disordered. The interval 170 to 187 (QNKEKPPPVPNPDYEPIR) is NUMB-binding region. The 28-residue stretch at 173-200 (EKPPPVPNPDYEPIRKGQQDLYSGLNQR) folds into the ITAM domain. The segment at 174–181 (KPPPVPNP) is proline-rich sequence. A phosphotyrosine mark is found at tyrosine 183 and tyrosine 194. Residues 192-202 (DLYSGLNQRGI) are compositionally biased toward polar residues.

In terms of assembly, the TCR-CD3 complex is composed of a CD3D/CD3E and a CD3G/CD3E heterodimers that preferentially associate with TCRalpha and TCRbeta, respectively, to form TCRalpha/CD3E/CD3G and TCRbeta/CD3G/CD3E trimers. In turn, the hexamer interacts with CD3Z homodimer to form the TCR-CD3 complex. Alternatively, TCRalpha and TCRbeta can be replaced by TCRgamma and TCRdelta. Interacts with CD6. Interacts (via Proline-rich sequence) with NCK1; the interaction is ligand dependent but independent of tyrosine kinase activation. Phosphorylated on Tyr residues after T-cell receptor triggering by LCK in association with CD4/CD8.

It is found in the cell membrane. In terms of biological role, part of the TCR-CD3 complex present on T-lymphocyte cell surface that plays an essential role in adaptive immune response. When antigen presenting cells (APCs) activate T-cell receptor (TCR), TCR-mediated signals are transmitted across the cell membrane by the CD3 chains CD3D, CD3E, CD3G and CD3Z. All CD3 chains contain immunoreceptor tyrosine-based activation motifs (ITAMs) in their cytoplasmic domain. Upon TCR engagement, these motifs become phosphorylated by Src family protein tyrosine kinases LCK and FYN, resulting in the activation of downstream signaling pathways. In addition of this role of signal transduction in T-cell activation, CD3E plays an essential role in correct T-cell development. Also participates in internalization and cell surface down-regulation of TCR-CD3 complexes via endocytosis sequences present in CD3E cytosolic region. In addition to its role as a TCR coreceptor, it serves as a receptor for ITPRIPL1. Ligand recognition inhibits T-cell activation by promoting interaction with NCK1, which prevents CD3E-ZAP70 interaction and blocks the ERK-NFkB signaling cascade and calcium influx. The chain is T-cell surface glycoprotein CD3 epsilon chain (CD3E) from Felis catus (Cat).